The following is a 154-amino-acid chain: Large ribosomal subunit protein uL15 (154 aa).

The tract at residues Met1 to Ser54 is disordered.

This sequence belongs to the universal ribosomal protein uL15 family. As to quaternary structure, part of the 50S ribosomal subunit.

Binds to the 23S rRNA. The chain is Large ribosomal subunit protein uL15 from Deinococcus geothermalis (strain DSM 11300 / CIP 105573 / AG-3a).